The primary structure comprises 130 residues: Small ribosomal subunit protein uS8 (130 aa).

It belongs to the universal ribosomal protein uS8 family. As to quaternary structure, part of the 30S ribosomal subunit. Contacts proteins S5 and S12.

Functionally, one of the primary rRNA binding proteins, it binds directly to 16S rRNA central domain where it helps coordinate assembly of the platform of the 30S subunit. This is Small ribosomal subunit protein uS8 from Pseudoalteromonas atlantica (strain T6c / ATCC BAA-1087).